The chain runs to 305 residues: uncharacterized protein (305 aa).

Residues 1 to 29 (MSKAVSEILGYMYIFGIVMAVLAIVFVQV) form the signal peptide.

This is an uncharacterized protein from Archaeoglobus fulgidus (strain ATCC 49558 / DSM 4304 / JCM 9628 / NBRC 100126 / VC-16).